The following is an 842-amino-acid chain: Pentatricopeptide repeat-containing protein At3g22690 (842 aa).

PPR repeat units lie at residues 98–132, 133–167, 168–202, 203–234, 235–269, 270–300, 301–335, 336–370, 371–401, 402–436, 437–463, 469–503, 504–534, 535–569, 570–605, and 606–636; these read TCFM…GISP, DKYT…GYAK, DLFV…NVVS, WTSM…EVTP, NSVT…GIEV, NDLM…YGAS, NLDL…GVRP, DRIS…GFES, WDNI…MSNK, TVVT…NIVS, WNTI…MQSQ, DGVT…GIQL, DVRL…LTNR, DVSA…GLKP, DGVA…GVSP, and EDVH…MPME. The segment at 641 to 716 is type E motif; the sequence is IWNSLLAACR…PPGTSSIQIR (76 aa). Residues 717–747 are type E(+) motif; sequence GKTHEFTSGDESHPEMPNIEAMLDEVSQRAS. The interval 748–842 is type DYW motif; it reads HLGHVPDLSN…QGKCSCGDFW (95 aa).

This sequence belongs to the PPR family. PCMP-H subfamily.

The polypeptide is Pentatricopeptide repeat-containing protein At3g22690 (PCMP-H56) (Arabidopsis thaliana (Mouse-ear cress)).